The primary structure comprises 212 residues: Putative 3-methyladenine DNA glycosylase (212 aa).

Belongs to the DNA glycosylase MPG family.

The chain is Putative 3-methyladenine DNA glycosylase from Psychrobacter cryohalolentis (strain ATCC BAA-1226 / DSM 17306 / VKM B-2378 / K5).